A 241-amino-acid polypeptide reads, in one-letter code: Ribose-5-phosphate isomerase A (241 aa).

Substrate-binding positions include 28 to 31 (TGST), 83 to 86 (DGAD), and 96 to 99 (KGGG). Residue E105 is the Proton acceptor of the active site. Substrate is bound at residue K123.

It belongs to the ribose 5-phosphate isomerase family. As to quaternary structure, homodimer.

It carries out the reaction aldehydo-D-ribose 5-phosphate = D-ribulose 5-phosphate. It participates in carbohydrate degradation; pentose phosphate pathway; D-ribose 5-phosphate from D-ribulose 5-phosphate (non-oxidative stage): step 1/1. Functionally, catalyzes the reversible conversion of ribose-5-phosphate to ribulose 5-phosphate. The chain is Ribose-5-phosphate isomerase A from Rhodopseudomonas palustris (strain BisA53).